Reading from the N-terminus, the 798-residue chain is Phenylalanine--tRNA ligase beta subunit (798 aa).

Positions 38-148 constitute a tRNA-binding domain; that stretch reads IGNYEKVVVG…PEAPVGEKIE (111 aa). The B5 domain occupies 400 to 475; the sequence is FTPKVIAVSL…RYLGYNNFPD (76 aa). Positions 453, 459, 462, and 463 each coordinate Mg(2+). The FDX-ACB domain occupies 703–796; sequence SPYPEVKRDI…LEAKTGAKLR (94 aa).

Belongs to the phenylalanyl-tRNA synthetase beta subunit family. Type 1 subfamily. As to quaternary structure, tetramer of two alpha and two beta subunits. Mg(2+) is required as a cofactor.

The protein localises to the cytoplasm. The enzyme catalyses tRNA(Phe) + L-phenylalanine + ATP = L-phenylalanyl-tRNA(Phe) + AMP + diphosphate + H(+). In Carboxydothermus hydrogenoformans (strain ATCC BAA-161 / DSM 6008 / Z-2901), this protein is Phenylalanine--tRNA ligase beta subunit.